Reading from the N-terminus, the 234-residue chain is MAKKVFKRLEKLFSKIQNDKAYGVEQGVEVVKSLASAKFDETVEVALRLGVDPRHADQMVRGAVVLPHGTGKKVRVAVFAKDIKQDEAKNAGADVVGGDDLAEEIKNGRIDFDMVIATPDMMAVVGKVGRILGPKGLMPNPKTGTVTMDIAKAVSNAKSGQVNFRVDKKGNVHAPIGKASFPEEKIKENMLELVKTINRLKPSSAKGKYIRNATLSLTMSPSVNLDAQELMDIK.

The protein belongs to the universal ribosomal protein uL1 family. Part of the 50S ribosomal subunit.

Binds directly to 23S rRNA. The L1 stalk is quite mobile in the ribosome, and is involved in E site tRNA release. In terms of biological role, protein L1 is also a translational repressor protein, it controls the translation of the L11 operon by binding to its mRNA. This is Large ribosomal subunit protein uL1 from Helicobacter pylori (strain Shi470).